Consider the following 959-residue polypeptide: Oxysterol-binding protein-related protein 6 (959 aa).

The interval 1–60 (MSSDEKGISPAHKTSTPTHRSASSSTSSQRESRQSIHVLERTASSSTEPSVSRQLLEPEP) is disordered. The residue at position 2 (Ser2) is an N-acetylserine. Residues 14–29 (TSTPTHRSASSSTSSQ) are compositionally biased toward low complexity. Residues 30 to 40 (RESRQSIHVLE) are compositionally biased toward basic and acidic residues. Phosphoserine is present on Ser35. Positions 42–53 (TASSSTEPSVSR) are enriched in polar residues. The 96-residue stretch at 86-181 (PDRHEGFMLK…WVSKLRHHRL (96 aa)) folds into the PH domain. Phosphoserine is present on residues Ser190 and Ser290.

Belongs to the OSBP family. In terms of assembly, homodimer. Interacts with OSBPL3. Expressed in skin, respiratory epithelium, small intestine epithelium, pancreas, striated muscle, brain, spinal ganglia, and nervous plexus of the intestine (at protein level). In the brain, specifically in the cerebellum, it is expressed in Purkinje and granule cells. Expressed in hepatocytes and macrophages.

The protein localises to the nucleus envelope. The protein resides in the cytoplasm. It is found in the cytosol. Its subcellular location is the endoplasmic reticulum membrane. It localises to the cell membrane. The protein localises to the endosome membrane. In terms of biological role, regulates cellular transport and efflux of cholesterol. Plays a role in phosphatidylinositol-4-phophate (PI4P) turnover at the neuronal membrane. Binds via its PH domain PI4P, phosphatidylinositol-4,5-diphosphate, phosphatidylinositol-3,4,5-triphosphate, and phosphatidic acid. Weakly binds 25-hydroxycholesterol. This chain is Oxysterol-binding protein-related protein 6 (Osbpl6), found in Mus musculus (Mouse).